Consider the following 102-residue polypeptide: NADH-quinone oxidoreductase subunit K (102 aa).

Transmembrane regions (helical) follow at residues 5–25, 30–50, and 62–82; these read LGHYLAVAAMLFTLGILGIFL, IIVILMSVELILLAVNINLVA, and VFALLVLTVAAAEAAIGLAVL.

This sequence belongs to the complex I subunit 4L family. In terms of assembly, NDH-1 is composed of 14 different subunits. Subunits NuoA, H, J, K, L, M, N constitute the membrane sector of the complex.

The protein resides in the cell inner membrane. The enzyme catalyses a quinone + NADH + 5 H(+)(in) = a quinol + NAD(+) + 4 H(+)(out). NDH-1 shuttles electrons from NADH, via FMN and iron-sulfur (Fe-S) centers, to quinones in the respiratory chain. The immediate electron acceptor for the enzyme in this species is believed to be ubiquinone. Couples the redox reaction to proton translocation (for every two electrons transferred, four hydrogen ions are translocated across the cytoplasmic membrane), and thus conserves the redox energy in a proton gradient. This is NADH-quinone oxidoreductase subunit K from Bradyrhizobium sp. (strain BTAi1 / ATCC BAA-1182).